The chain runs to 513 residues: ATP synthase subunit alpha (513 aa).

Position 169–176 (169–176) interacts with ATP; sequence GDRQTGKT.

The protein belongs to the ATPase alpha/beta chains family. F-type ATPases have 2 components, CF(1) - the catalytic core - and CF(0) - the membrane proton channel. CF(1) has five subunits: alpha(3), beta(3), gamma(1), delta(1), epsilon(1). CF(0) has three main subunits: a(1), b(2) and c(9-12). The alpha and beta chains form an alternating ring which encloses part of the gamma chain. CF(1) is attached to CF(0) by a central stalk formed by the gamma and epsilon chains, while a peripheral stalk is formed by the delta and b chains.

The protein localises to the cell inner membrane. It carries out the reaction ATP + H2O + 4 H(+)(in) = ADP + phosphate + 5 H(+)(out). Produces ATP from ADP in the presence of a proton gradient across the membrane. The alpha chain is a regulatory subunit. This chain is ATP synthase subunit alpha, found in Proteus mirabilis (strain HI4320).